A 471-amino-acid polypeptide reads, in one-letter code: MSICPHIQQVFQNEKSKDGVLKTCNAARYILNHSVPKEKFLNTMKCGTCHEINSGATFMCLQCGFCGCWNHSHFLSHSKQIGHIFGINSNNGLLFCFKCEDYIGNIDLINDAILAKYWDDVCTKTMVPSMERRDGLSGLINMGSTCFMSSILQCLIHNPYFIRHSMSQIHSNNCKVRSPDKCFSCALDKIVHELYGALNTKQASSSSTSTNRQTGFIYLLTCAWKINQNLAGYSQQDAHEFWQFIINQIHQSYVLDLPNAKEVSRANNKQCECIVHTVFEGSLESSIVCPGCQNNSKTTIDPFLDLSLDIKDKKKLYECLDSFHKKEQLKDFNYHCGECNSTQDAIKQLGIHKLPSVLVLQLKRFEHLLNGSNRKLDDFIEFPTYLNMKNYCSTKEKDKHSENGKVPDIIYELIGIVSHKGTVNEGHYIAFCKISGGQWFKFNDSMVSSISQEEVLKEQAYLLFYTIRQVN.

Zn(2+) contacts are provided by Cys4, His6, Cys46, Cys49, Cys60, Cys63, Cys68, His73, His77, His83, Cys96, and Cys99. Residues 22-122 (KTCNAARYIL…ILAKYWDDVC (101 aa)) form a UBP-type; degenerate zinc finger. The region spanning 137–468 (SGLINMGSTC…QAYLLFYTIR (332 aa)) is the USP domain. Residue Cys146 is the Nucleophile of the active site. 12 residues coordinate Zn(2+): His170, Cys174, Cys182, Cys185, His250, Cys271, Cys273, His276, Cys289, Cys292, Cys336, and Cys339. His427 (proton acceptor) is an active-site residue.

It belongs to the peptidase C19 family. UBP8 subfamily. In terms of assembly, component of the 1.8 MDa SAGA (Spt-Ada-Gcn5 acetyltransferase) complex, which is composed of 19 subunits TRA1, SPT7, TAF5, NGG1/ADA3, SGF73, SPT20/ADA5, SPT8, TAF12, TAF6, HFI1/ADA1, UBP8, GCN5, ADA2, SPT3, SGF29, TAF10, TAF9, SGF11 and SUS1. The SAGA complex is composed of 4 modules, namely the HAT (histone acetyltransferase) module (GCN5, ADA2, NGG1/ADA3 and SGF29), the DUB (deubiquitinating) module (UBP8, SGF11, SGF73 and SUS1), the core or TAF (TBP-associated factor) module (TAF5, TAF6, TAF9, TAF10 and TAF12), and the Tra1 or SPT (Suppressor of Ty) module (TRA1, HFI1/ADA1, SPT3, SPT7, SPT8 and SPT20/ADA5). The Tra1/SPT module binds activators, the core module recruits TBP (TATA-binding protein), the HAT module contains the histone H3 acetyltransferase GCN5, and the DUB module comprises the histone H2B deubiquitinase UBP8. Also identified in an altered form of SAGA, named SALSA (SAGA altered, Spt8 absent) or SLIK (SAGA-like) complex, which contains a C-terminal truncated form of SPT7 and is missing SPT8. However, it has been shown that the SAGA and SAGA-like SALSA/SLIK transcriptional coactivators are structurally and biochemically equivalent.

The protein localises to the nucleus. It carries out the reaction Thiol-dependent hydrolysis of ester, thioester, amide, peptide and isopeptide bonds formed by the C-terminal Gly of ubiquitin (a 76-residue protein attached to proteins as an intracellular targeting signal).. In terms of biological role, histone deubiquitinating enzyme component of the transcription coactivator SAGA complex. SAGA acts as a general cofactor required for essentially all RNA polymerase II transcription. At the promoters, SAGA is required for transcription pre-initiation complex (PIC) recruitment. It influences RNA polymerase II transcriptional activity through different activities such as TBP interaction (via core/TAF module) and promoter selectivity, interaction with transcription activators (via Tra1/SPT module), and chromatin modification through histone acetylation (via HAT module) and deubiquitination (via DUB module). SAGA preferentially acetylates histones H3 (to form H3K9ac, H3K14ac, H3K18ac and H3K23ac) and H2B and deubiquitinates histone H2B. SAGA interacts with DNA via upstream activating sequences (UASs). Also identified in a modified version of SAGA named SALSA or SLIK. The cleavage of SPT7 and the absence of the SPT8 subunit in SLIK neither drive any major conformational differences in its structure compared with SAGA, nor significantly affect HAT, DUB, or DNA-binding activities. Within the DUB module, the correctly positioned zinc finger domains of SGF11 and SGF73 are both required to fully activate the ubiquitin hydrolase UBP8. The DUB module is also linked to the splicing efficiency of many transcripts. In Saccharomyces cerevisiae (strain ATCC 204508 / S288c) (Baker's yeast), this protein is Ubiquitin carboxyl-terminal hydrolase 8 (UBP8).